A 193-amino-acid chain; its full sequence is ATP-dependent Clp protease proteolytic subunit (193 aa).

The active-site Nucleophile is the S98. H123 is a catalytic residue.

This sequence belongs to the peptidase S14 family. As to quaternary structure, fourteen ClpP subunits assemble into 2 heptameric rings which stack back to back to give a disk-like structure with a central cavity, resembling the structure of eukaryotic proteasomes.

The protein resides in the cytoplasm. It catalyses the reaction Hydrolysis of proteins to small peptides in the presence of ATP and magnesium. alpha-casein is the usual test substrate. In the absence of ATP, only oligopeptides shorter than five residues are hydrolyzed (such as succinyl-Leu-Tyr-|-NHMec, and Leu-Tyr-Leu-|-Tyr-Trp, in which cleavage of the -Tyr-|-Leu- and -Tyr-|-Trp bonds also occurs).. Cleaves peptides in various proteins in a process that requires ATP hydrolysis. Has a chymotrypsin-like activity. Plays a major role in the degradation of misfolded proteins. The protein is ATP-dependent Clp protease proteolytic subunit of Lachnospira eligens (strain ATCC 27750 / DSM 3376 / VPI C15-48 / C15-B4) (Eubacterium eligens).